We begin with the raw amino-acid sequence, 313 residues long: ADP-L-glycero-D-manno-heptose-6-epimerase (313 aa).

NADP(+)-binding positions include 10–11, 31–32, Lys38, Arg53, 75–79, and Asn92; these read MI, DN, and EGACS. The Proton acceptor role is filled by Tyr139. NADP(+) is bound at residue Lys143. Residue Asn174 participates in substrate binding. The NADP(+) site is built by Val175 and Lys183. Lys183 acts as the Proton acceptor in catalysis. Residues Ser185, His192, 206–209, Arg214, and Tyr277 each bind substrate; that span reads FAGS.

This sequence belongs to the NAD(P)-dependent epimerase/dehydratase family. HldD subfamily. As to quaternary structure, homopentamer. It depends on NADP(+) as a cofactor.

The enzyme catalyses ADP-D-glycero-beta-D-manno-heptose = ADP-L-glycero-beta-D-manno-heptose. The protein operates within nucleotide-sugar biosynthesis; ADP-L-glycero-beta-D-manno-heptose biosynthesis; ADP-L-glycero-beta-D-manno-heptose from D-glycero-beta-D-manno-heptose 7-phosphate: step 4/4. Functionally, catalyzes the interconversion between ADP-D-glycero-beta-D-manno-heptose and ADP-L-glycero-beta-D-manno-heptose via an epimerization at carbon 6 of the heptose. The sequence is that of ADP-L-glycero-D-manno-heptose-6-epimerase from Vibrio campbellii (strain ATCC BAA-1116).